The chain runs to 96 residues: Pterin-4-alpha-carbinolamine dehydratase (96 aa).

It belongs to the pterin-4-alpha-carbinolamine dehydratase family.

Its subcellular location is the spore wall. The catalysed reaction is (4aS,6R)-4a-hydroxy-L-erythro-5,6,7,8-tetrahydrobiopterin = (6R)-L-erythro-6,7-dihydrobiopterin + H2O. In terms of biological role, has a role in spore wall formation. The polypeptide is Pterin-4-alpha-carbinolamine dehydratase (omt2) (Schizosaccharomyces pombe (strain 972 / ATCC 24843) (Fission yeast)).